The chain runs to 408 residues: LL-diaminopimelate aminotransferase (408 aa).

Substrate is bound by residues tyrosine 15 and glycine 42. Pyridoxal 5'-phosphate is bound by residues tyrosine 72, 108–109 (SK), tyrosine 132, asparagine 187, tyrosine 218, and 246–248 (SFS). Residues lysine 109, tyrosine 132, and asparagine 187 each coordinate substrate. Lysine 249 carries the N6-(pyridoxal phosphate)lysine modification. Residues arginine 257 and asparagine 292 each coordinate pyridoxal 5'-phosphate. Substrate contacts are provided by asparagine 292 and arginine 388.

Belongs to the class-I pyridoxal-phosphate-dependent aminotransferase family. LL-diaminopimelate aminotransferase subfamily. In terms of assembly, homodimer. The cofactor is pyridoxal 5'-phosphate.

The catalysed reaction is (2S,6S)-2,6-diaminopimelate + 2-oxoglutarate = (S)-2,3,4,5-tetrahydrodipicolinate + L-glutamate + H2O + H(+). Its pathway is amino-acid biosynthesis; L-lysine biosynthesis via DAP pathway; LL-2,6-diaminopimelate from (S)-tetrahydrodipicolinate (aminotransferase route): step 1/1. Its function is as follows. Involved in the synthesis of meso-diaminopimelate (m-DAP or DL-DAP), required for both lysine and peptidoglycan biosynthesis. Catalyzes the direct conversion of tetrahydrodipicolinate to LL-diaminopimelate. The protein is LL-diaminopimelate aminotransferase of Leptospira interrogans serogroup Icterohaemorrhagiae serovar Lai (strain 56601).